We begin with the raw amino-acid sequence, 651 residues long: Nucleolin (651 aa).

Positions 1-11 (MVKLAKGAKTQ) are enriched in low complexity. A disordered region spans residues 1–230 (MVKLAKGAKT…AKKTKTDTAS (230 aa)). The segment covering 26–45 (EDSEEEEDMEEDDSSDEEVE) has biased composition (acidic residues). Over residues 54-79 (KKTATPAKATPGKAATPGKKGATPAK) the composition is skewed to low complexity. A compositionally biased stretch (acidic residues) spans 89–101 (SEEEEDDSDEEAE). Over residues 106–116 (IKNKPVAKKAV) the composition is skewed to basic residues. Acidic residues-rich tracts occupy residues 122–134 (SEED…ESEE), 155–168 (SEEE…DEPM), and 183–204 (AEED…EEEQ). At Ser-155 the chain carries Phosphoserine. The span at 219–228 (PEAKKTKTDT) shows a compositional bias: basic and acidic residues. 4 consecutive RRM domains span residues 233–309 (LSIF…KAMA), 325–399 (RTLF…FTGE), 415–488 (KVLV…FSQG), and 503–578 (KTLF…FAKP). The tract at residues 574–651 (DFAKPKGDSQ…GQGKKMRFDD (78 aa)) is disordered. Over residues 585 to 644 (GGRGGFGRGGGFRGGRGGRGGGGGRGFGGRGGGRGRGGFGGRGGGGFRGGQGGGFRGGQG) the composition is skewed to gly residues.

It is found in the nucleus. The protein resides in the nucleolus. Its function is as follows. Nucleolin is the major nucleolar protein of growing eukaryotic cells. It is found associated with intranucleolar chromatin and pre-ribosomal particles. It induces chromatin decondensation by binding to histone H1. It is thought to play a role in pre-rRNA transcription and ribosome assembly. This is Nucleolin (ncl) from Xenopus laevis (African clawed frog).